Here is a 115-residue protein sequence, read N- to C-terminus: Cell division topological specificity factor (115 aa).

Residues 93-115 (QLKEPKNQSELDSPETEGTDQKS) form a disordered region. Residues 104–115 (DSPETEGTDQKS) are compositionally biased toward acidic residues.

Belongs to the MinE family.

Functionally, prevents the cell division inhibition by proteins MinC and MinD at internal division sites while permitting inhibition at polar sites. This ensures cell division at the proper site by restricting the formation of a division septum at the midpoint of the long axis of the cell. This chain is Cell division topological specificity factor, found in Prochlorococcus marinus (strain NATL1A).